A 404-amino-acid polypeptide reads, in one-letter code: Argininosuccinate synthase (404 aa).

ATP-binding positions include 10–18 (AYSGGVDTS) and Ala38. Residue Tyr89 coordinates L-citrulline. Gly119 lines the ATP pocket. Positions 121, 125, and 126 each coordinate L-aspartate. Position 125 (Asn125) interacts with L-citrulline. Residues Arg129, Ser177, Ser186, Glu262, and Tyr274 each coordinate L-citrulline.

Belongs to the argininosuccinate synthase family. Type 1 subfamily. In terms of assembly, homotetramer.

It localises to the cytoplasm. It carries out the reaction L-citrulline + L-aspartate + ATP = 2-(N(omega)-L-arginino)succinate + AMP + diphosphate + H(+). It participates in amino-acid biosynthesis; L-arginine biosynthesis; L-arginine from L-ornithine and carbamoyl phosphate: step 2/3. In Prochlorococcus marinus (strain MIT 9312), this protein is Argininosuccinate synthase.